Consider the following 412-residue polypeptide: MILASVLGSGPRGGPPLRPLLGPALSLRARSTSATDTHHVEMARERSKTVTSFYNQSAIDVAAEKPSVRLTPTMMLYSGRSQDGSHLLKSARYLQQELPVRIAHRIKGFRSLPFIIGCNPTILHVHELYIRAFQKLTDFPPIKDQADEARYCQLVRQLLDDHKDVVTLLAEGLRESRKYIEDEKLVRYFLDKTLTSRLGIRMLATHHLALHEDKPDFVGIICTRLSPKKIIEKWVDFARRLCEHKYGNAPRVRINGHVAARFPFIPMPLDYILPELLKNAMRATMESHLDTPYNVPDVVITIANNDIDLVIRISDRGGGIAHKDLDRVMDYHFTTAEASTQDPRISPLFGHLDLHSGGQSGPMHGFGFGLPTSRAYAEYLGGSLRLQSLQGIGTDVYLRLRHIDGREESFRI.

The N-terminal 30 residues, 1–30 (MILASVLGSGPRGGPPLRPLLGPALSLRAR), are a transit peptide targeting the mitochondrion. S31 carries the phosphoserine modification. S52 is subject to Phosphoserine; by autocatalysis. The 246-residue stretch at 159 to 404 (LDDHKDVVTL…DVYLRLRHID (246 aa)) folds into the Histidine kinase domain. Residues K192 and K233 each carry the N6-acetyllysine modification. N279 and D315 together coordinate ATP. N279 provides a ligand contact to Mg(2+). V328, D330, and F333 together coordinate K(+). Residues T334 and T335 each contribute to the ATP site. A phosphoserine mark is found at S356 and S360. 3 residues coordinate ATP: H364, G367, and L370. Position 367 (G367) interacts with K(+).

Belongs to the PDK/BCKDK protein kinase family. As to quaternary structure, homodimer. Homotetramer. Dimerizes through interaction of two opposing nucleotide-binding domains. Interacts with E2 component of the branched-chain alpha-ketoacid dehydrogenase (BCKDH) complex. Competes with BCKDK for binding to the E2 component; this interaction is modulated by branched-chain alpha-keto acids. At steady state, BCKDH holoenzyme contains BCKDK and BCKDHA is phosphorylated. In response to high levels of branched-chain alpha-keto acids, the inhibitory BCKDK is replaced by activating PPM1K leading to BCKDHA dephosphorylation and BCAA degradation. Autophosphorylated.

It localises to the mitochondrion matrix. The protein resides in the mitochondrion. The catalysed reaction is L-seryl-[3-methyl-2-oxobutanoate dehydrogenase] + ATP = O-phospho-L-seryl-[3-methyl-2-oxobutanoate dehydrogenase] + ADP + H(+). The enzyme catalyses L-seryl-[protein] + ATP = O-phospho-L-seryl-[protein] + ADP + H(+). In terms of biological role, serine/threonine-protein kinase component of macronutrients metabolism. Forms a functional kinase and phosphatase pair with PPM1K, serving as a metabolic regulatory node that coordinates branched-chain amino acids (BCAAs) with glucose and lipid metabolism via two distinct phosphoprotein targets: mitochondrial BCKDHA subunit of the branched-chain alpha-ketoacid dehydrogenase (BCKDH) complex and cytosolic ACLY, a lipogenic enzyme of Krebs cycle. Phosphorylates and inactivates mitochondrial BCKDH complex a multisubunit complex consisting of three multimeric components each involved in different steps of BCAA catabolism: E1 composed of BCKDHA and BCKDHB, E2 core composed of DBT monomers, and E3 composed of DLD monomers. Associates with the E2 component of BCKDH complex and phosphorylates BCKDHA on Ser-347, leading to conformational changes that interrupt substrate channeling between E1 and E2 and inactivates the BCKDH complex. Phosphorylates ACLY on Ser-455 in response to changes in cellular carbohydrate abundance such as occurs during fasting to feeding metabolic transition. Refeeding stimulates MLXIPL/ChREBP transcription factor, leading to increased BCKDK to PPM1K expression ratio, phosphorylation and activation of ACLY that ultimately results in the generation of malonyl-CoA and oxaloacetate immediate substrates of de novo lipogenesis and glucogenesis, respectively. Recognizes phosphosites having SxxE/D canonical motif. The sequence is that of Branched-chain alpha-ketoacid dehydrogenase kinase (BCKDK) from Bos taurus (Bovine).